A 128-amino-acid polypeptide reads, in one-letter code: Keratin-associated protein 21-1 (128 aa).

A 51 X 2 AA repeats of G-[YCGS] region spans residues 11–117; the sequence is GGCGYGSRYG…RYGCGYGSGC (107 aa).

It belongs to the KRTAP type 21 family. As to quaternary structure, interacts with hair keratins. Strong expression in narrowly defined pattern restricted to the lower and middle cortical regions of the hair shaft in both developing and cycling hair. During hair follicle regression (catagen), expression levels decrease until expression is no longer detectable in follicles at resting stage (telogen).

Its function is as follows. In the hair cortex, hair keratin intermediate filaments are embedded in an interfilamentous matrix, consisting of hair keratin-associated proteins (KRTAP), which are essential for the formation of a rigid and resistant hair shaft through their extensive disulfide bond cross-linking with abundant cysteine residues of hair keratins. The matrix proteins include the high-sulfur and high-glycine-tyrosine keratins. The protein is Keratin-associated protein 21-1 (Krtap21-1) of Mus musculus (Mouse).